The primary structure comprises 338 residues: DNA-directed RNA polymerase subunit alpha (338 aa).

Residues 1 to 234 (MIERNWNELI…DQLQIFITFE (234 aa)) are alpha N-terminal domain (alpha-NTD). The segment at 250–338 (FNPALLKKVD…DLAKKFEDQI (89 aa)) is alpha C-terminal domain (alpha-CTD).

This sequence belongs to the RNA polymerase alpha chain family. As to quaternary structure, homodimer. The RNAP catalytic core consists of 2 alpha, 1 beta, 1 beta' and 1 omega subunit. When a sigma factor is associated with the core the holoenzyme is formed, which can initiate transcription.

It catalyses the reaction RNA(n) + a ribonucleoside 5'-triphosphate = RNA(n+1) + diphosphate. In terms of biological role, DNA-dependent RNA polymerase catalyzes the transcription of DNA into RNA using the four ribonucleoside triphosphates as substrates. This is DNA-directed RNA polymerase subunit alpha from Caulobacter vibrioides (strain ATCC 19089 / CIP 103742 / CB 15) (Caulobacter crescentus).